Consider the following 310-residue polypeptide: Glutaminase (310 aa).

Substrate contacts are provided by serine 66, asparagine 117, glutamate 161, asparagine 168, tyrosine 192, tyrosine 244, and valine 262.

It belongs to the glutaminase family. As to quaternary structure, homotetramer.

It carries out the reaction L-glutamine + H2O = L-glutamate + NH4(+). The protein is Glutaminase of Desulfovibrio desulfuricans (strain ATCC 27774 / DSM 6949 / MB).